Here is a 48-residue protein sequence, read N- to C-terminus: MQHCILILAWGKCILKAKFFLPLLPVRFVLGDPEDNAGTQTGDPARGR.

The chain is Probable protein E5A from Bos taurus papillomavirus 4 (Bovine papillomavirus 4).